A 177-amino-acid polypeptide reads, in one-letter code: CASP-like protein 5A2 (177 aa).

Residues M1 to T36 are Cytoplasmic-facing. The chain crosses the membrane as a helical span at residues I37 to M57. Topologically, residues V58 to A68 are extracellular. The N-linked (GlcNAc...) asparagine glycan is linked to N62. The helical transmembrane segment at F69–I89 threads the bilayer. The Cytoplasmic portion of the chain corresponds to D90–S103. The helical transmembrane segment at L104–A124 threads the bilayer. Over C125–T153 the chain is Extracellular. Residues A154–L174 form a helical membrane-spanning segment. At A175–R177 the chain is on the cytoplasmic side.

Belongs to the Casparian strip membrane proteins (CASP) family. In terms of assembly, homodimer and heterodimers.

Its subcellular location is the cell membrane. The sequence is that of CASP-like protein 5A2 from Ginkgo biloba (Ginkgo).